The following is a 319-amino-acid chain: BTB/POZ domain-containing adapter for CUL3-mediated RhoA degradation protein 2 (319 aa).

The BTB domain maps to 31–99 (KYIRLNVGGC…LRDDTIALPK (69 aa)).

It belongs to the BACURD family. In terms of assembly, component of the BCR(TNFAIP1) E3 ubiquitin ligase complex, at least composed of cul3, tnfaip1/bacurd2 and rbx1.

The protein localises to the cytoplasm. It localises to the nucleus. The protein resides in the endosome. The protein operates within protein modification; protein ubiquitination. Its function is as follows. Substrate-specific adapter of a BCR (BTB-CUL3-RBX1) E3 ubiquitin-protein ligase complex involved in regulation of cytoskeleton structure. The BCR(TNFAIP1) E3 ubiquitin ligase complex mediates the ubiquitination of target proteins, leading to their degradation by the proteasome. This Xenopus laevis (African clawed frog) protein is BTB/POZ domain-containing adapter for CUL3-mediated RhoA degradation protein 2 (tnfaip1).